Consider the following 376-residue polypeptide: Transcription factor Sp6 (376 aa).

The disordered stretch occupies residues 1–70 (MLTAVCGSLG…VDFSQGYELP (70 aa)). The 9aaTAD motif lies at 118-126 (GSWWDLHPG). Residues 167–223 (HPHAHHLLPAAGGQHLLGPPDGAKALEVAAPESQGLDSSLDGAARPKGSRRSVPRSS) are disordered. A compositionally biased stretch (low complexity) spans 173 to 186 (LLPAAGGQHLLGPP). C2H2-type zinc fingers lie at residues 254-278 (HNCHIPGCGKAYAKTSHLKAHLRWH), 284-308 (FVCNWLFCGKRFTRSDELQRHLQTH), and 314-336 (FPCAVCSRVFMRSDHLAKHMKTH). Positions 333–343 (MKTHEGAKEEA) are enriched in basic and acidic residues. Residues 333–376 (MKTHEGAKEEAAGAASGEGKAGGAVEPPGGKGKREAEGSVAPSN) are disordered.

It belongs to the Sp1 C2H2-type zinc-finger protein family. In terms of tissue distribution, ubiquitous.

The protein localises to the nucleus. Its function is as follows. Promotes cell proliferation. Plays a role in tooth germ growth. Plays a role in the control of enamel mineralization. Binds the AMBN promoter. The sequence is that of Transcription factor Sp6 (SP6) from Homo sapiens (Human).